The primary structure comprises 959 residues: DEAD-box ATP-dependent RNA helicase rde-12 (959 aa).

The tract at residues M1 to P336 is disordered. The span at G71–N97 shows a compositional bias: basic and acidic residues. Polar residues predominate over residues N98–G118. Residues Y122–G134 are compositionally biased toward basic and acidic residues. Residues N137–Y160 are compositionally biased toward polar residues. 2 stretches are compositionally biased toward basic and acidic residues: residues S166 to Q181 and R189 to N201. Polar residues predominate over residues Y202–G213. Composition is skewed to basic and acidic residues over residues S219–Y239 and Y255–S270. The span at G271–K280 shows a compositional bias: low complexity. The segment covering N281 to F301 has biased composition (gly residues). Positions G302 to G317 are enriched in low complexity. Positions T380–G408 match the Q motif motif. The Helicase ATP-binding domain maps to I411–Q599. A424–T431 is a binding site for ATP. The DEAD box motif lies at D539–D542. The Helicase C-terminal domain occupies K632–A792. 2 disordered regions span residues K793–R834 and G858–W959. 2 stretches are compositionally biased toward gly residues: residues G800 to R834 and G858 to G872. The segment covering T930–N941 has biased composition (polar residues). Over residues A942–W959 the composition is skewed to acidic residues.

Belongs to the DEAD box helicase family. DDX3/DED1 subfamily. As to quaternary structure, interacts with wago-1, ergo-1 and rde-1. Requires Mg(2+) as cofactor. Expressed in the soma and germline.

The protein localises to the cytoplasm. It localises to the perinuclear region. It is found in the cytoplasmic granule. Its subcellular location is the P-body. It catalyses the reaction ATP + H2O = ADP + phosphate + H(+). Its function is as follows. Probable ATP-dependent RNA helicase involved in RNAi-mediated gene silencing. Specifically required in the endogenous siRNA pathway for biogenesis of secondary endogenous small interfering RNA (siRNA) intermediates called 22G-RNAs. May associate with and recruit rde-10 to primary siRNA-targeted mRNA for secondary siRNA synthesis. May be recruited to target mRNAs by rde-1 and/or ergo-1. The protein is DEAD-box ATP-dependent RNA helicase rde-12 of Caenorhabditis elegans.